Reading from the N-terminus, the 294-residue chain is Elongation factor Ts (294 aa).

The segment at 82–85 (TDFV) is involved in Mg(2+) ion dislocation from EF-Tu.

This sequence belongs to the EF-Ts family.

The protein resides in the cytoplasm. Its function is as follows. Associates with the EF-Tu.GDP complex and induces the exchange of GDP to GTP. It remains bound to the aminoacyl-tRNA.EF-Tu.GTP complex up to the GTP hydrolysis stage on the ribosome. The protein is Elongation factor Ts of Psychrobacter arcticus (strain DSM 17307 / VKM B-2377 / 273-4).